The sequence spans 341 residues: MATIYYDKDANLDLLKKRKVAIIGYGSQGHAHALNLRDSGVDVRVGLAAGSKSKAKAEGAGLRVLSVAEASKEADVIMVLIPDQTQKKVYDEEIAPHLSKGKALLFAHGFNIHFVQVRPPADVDVLLVAPKGPGHMVRRQYQDGRGIPGLVAVHQDATGQAKAVGLAYARGIGCTRAGVLETTFKEETETDLFGEQAVLCGGAAALVKNGFEVLVEAGYQPESAYFECLHELKLIVDLMYEGGLAWMRHSISDTAEYGDYTRGPRVVDGRSKDEMRKILKEIQGGHFAKEFILENQAGGPTMARYRAAEAAHPIEEVGKRLRDMMSWIREAKKDSSDPGSR.

In terms of domain architecture, KARI N-terminal Rossmann spans 1–182 (MATIYYDKDA…GCTRAGVLET (182 aa)). Residues 25 to 28 (YGSQ), Ser-51, Ser-53, and 83 to 86 (DQTQ) each bind NADP(+). Residue His-108 is part of the active site. Gly-134 contacts NADP(+). The KARI C-terminal knotted domain occupies 183–328 (TFKEETETDL…KRLRDMMSWI (146 aa)). Mg(2+) is bound by residues Asp-191, Glu-195, Glu-227, and Glu-231. Substrate is bound at residue Ser-252.

It belongs to the ketol-acid reductoisomerase family. The cofactor is Mg(2+).

It carries out the reaction (2R)-2,3-dihydroxy-3-methylbutanoate + NADP(+) = (2S)-2-acetolactate + NADPH + H(+). It catalyses the reaction (2R,3R)-2,3-dihydroxy-3-methylpentanoate + NADP(+) = (S)-2-ethyl-2-hydroxy-3-oxobutanoate + NADPH + H(+). Its pathway is amino-acid biosynthesis; L-isoleucine biosynthesis; L-isoleucine from 2-oxobutanoate: step 2/4. It functions in the pathway amino-acid biosynthesis; L-valine biosynthesis; L-valine from pyruvate: step 2/4. Its function is as follows. Involved in the biosynthesis of branched-chain amino acids (BCAA). Catalyzes an alkyl-migration followed by a ketol-acid reduction of (S)-2-acetolactate (S2AL) to yield (R)-2,3-dihydroxy-isovalerate. In the isomerase reaction, S2AL is rearranged via a Mg-dependent methyl migration to produce 3-hydroxy-3-methyl-2-ketobutyrate (HMKB). In the reductase reaction, this 2-ketoacid undergoes a metal-dependent reduction by NADPH to yield (R)-2,3-dihydroxy-isovalerate. The chain is Ketol-acid reductoisomerase (NADP(+)) from Anaeromyxobacter sp. (strain K).